The primary structure comprises 99 residues: uncharacterized protein (99 aa).

A coiled-coil region spans residues 3–68 (ERLKAITNLL…EKFDSNRKFY (66 aa)).

This is an uncharacterized protein from Aquifex aeolicus (strain VF5).